A 180-amino-acid polypeptide reads, in one-letter code: Urease accessory protein UreE (180 aa).

The tract at residues 71-90 (AAPSGAGHGDGEQDGTGAPG) is disordered.

Belongs to the UreE family.

It localises to the cytoplasm. Involved in urease metallocenter assembly. Binds nickel. Probably functions as a nickel donor during metallocenter assembly. The chain is Urease accessory protein UreE from Kocuria rhizophila (strain ATCC 9341 / DSM 348 / NBRC 103217 / DC2201).